Consider the following 197-residue polypeptide: MTTPSKISAVAEITNDFKESNAAVLTEYRGLTVAQLKELRVALGQDTKFSVVKNTLSAIAAKEAGVEAFNDQLAGPTAIAFIKGDAVAAAKSLTDFAKANKQLVIKTGVFEGKALDAAGVAALAALESRELQLARVAGVLKAPASAAARIIDALRLKLEEEGGASAPAAEEAPAAEEAAAEEVAAPAEAAEAATEEN.

Positions 162–197 (GGASAPAAEEAPAAEEAAAEEVAAPAEAAEAATEEN) are disordered. Low complexity predominate over residues 163–197 (GASAPAAEEAPAAEEAAAEEVAAPAEAAEAATEEN).

Belongs to the universal ribosomal protein uL10 family. In terms of assembly, part of the ribosomal stalk of the 50S ribosomal subunit. The N-terminus interacts with L11 and the large rRNA to form the base of the stalk. The C-terminus forms an elongated spine to which L12 dimers bind in a sequential fashion forming a multimeric L10(L12)X complex.

In terms of biological role, forms part of the ribosomal stalk, playing a central role in the interaction of the ribosome with GTP-bound translation factors. The sequence is that of Large ribosomal subunit protein uL10 from Paenarthrobacter aurescens (strain TC1).